The chain runs to 120 residues: Large ribosomal subunit protein eL8 (120 aa).

This sequence belongs to the eukaryotic ribosomal protein eL8 family. As to quaternary structure, part of the 50S ribosomal subunit. Probably part of the RNase P complex.

It is found in the cytoplasm. Functionally, multifunctional RNA-binding protein that recognizes the K-turn motif in ribosomal RNA, the RNA component of RNase P, box H/ACA, box C/D and box C'/D' sRNAs. The sequence is that of Large ribosomal subunit protein eL8 from Methanosarcina acetivorans (strain ATCC 35395 / DSM 2834 / JCM 12185 / C2A).